A 545-amino-acid polypeptide reads, in one-letter code: Chaperonin GroEL (545 aa).

ATP is bound by residues 30 to 33 (TLGP), Lys-51, 87 to 91 (DGTTT), Gly-415, and Asp-495.

Belongs to the chaperonin (HSP60) family. As to quaternary structure, forms a cylinder of 14 subunits composed of two heptameric rings stacked back-to-back. Interacts with the co-chaperonin GroES.

Its subcellular location is the cytoplasm. It catalyses the reaction ATP + H2O + a folded polypeptide = ADP + phosphate + an unfolded polypeptide.. In terms of biological role, together with its co-chaperonin GroES, plays an essential role in assisting protein folding. The GroEL-GroES system forms a nano-cage that allows encapsulation of the non-native substrate proteins and provides a physical environment optimized to promote and accelerate protein folding. This is Chaperonin GroEL from Shewanella amazonensis (strain ATCC BAA-1098 / SB2B).